Consider the following 368-residue polypeptide: Biotin synthase (368 aa).

Positions 46 to 277 (VHGDEVALCG…AAHIFVMGGR (232 aa)) constitute a Radical SAM core domain. [4Fe-4S] cluster-binding residues include C64, C68, and C71. S109, C142, and C202 together coordinate [2Fe-2S] cluster. Residues 347-368 (RAAEPGGKRGLPVVGPPRGGCA) are disordered.

This sequence belongs to the radical SAM superfamily. Biotin synthase family. In terms of assembly, homodimer. [4Fe-4S] cluster serves as cofactor. [2Fe-2S] cluster is required as a cofactor.

The catalysed reaction is (4R,5S)-dethiobiotin + (sulfur carrier)-SH + 2 reduced [2Fe-2S]-[ferredoxin] + 2 S-adenosyl-L-methionine = (sulfur carrier)-H + biotin + 2 5'-deoxyadenosine + 2 L-methionine + 2 oxidized [2Fe-2S]-[ferredoxin]. The protein operates within cofactor biosynthesis; biotin biosynthesis; biotin from 7,8-diaminononanoate: step 2/2. Functionally, catalyzes the conversion of dethiobiotin (DTB) to biotin by the insertion of a sulfur atom into dethiobiotin via a radical-based mechanism. The polypeptide is Biotin synthase (Anaeromyxobacter sp. (strain Fw109-5)).